A 98-amino-acid chain; its full sequence is NADH-ubiquinone oxidoreductase chain 4L (98 aa).

The next 3 membrane-spanning stretches (helical) occupy residues 1–21 (MSPI…GLLI), 30–50 (LLCL…LALT), and 61–81 (IILL…LVMV).

Belongs to the complex I subunit 4L family. As to quaternary structure, core subunit of respiratory chain NADH dehydrogenase (Complex I) which is composed of 45 different subunits.

The protein resides in the mitochondrion inner membrane. The enzyme catalyses a ubiquinone + NADH + 5 H(+)(in) = a ubiquinol + NAD(+) + 4 H(+)(out). In terms of biological role, core subunit of the mitochondrial membrane respiratory chain NADH dehydrogenase (Complex I) which catalyzes electron transfer from NADH through the respiratory chain, using ubiquinone as an electron acceptor. Part of the enzyme membrane arm which is embedded in the lipid bilayer and involved in proton translocation. In Chrysochloris asiatica (Cape golden mole), this protein is NADH-ubiquinone oxidoreductase chain 4L (MT-ND4L).